The sequence spans 569 residues: MDEEARAAGCSPAPPRAPAASCGAAAELCLCSPTGVEGIEQVPGCPCFEDAGAVVVSGEAPEGPGVLCSEDGAELKLAEQGALDVRLGSPAVGIHEQQLLHRGTSGSDEAGAINEISPVEVSPSEASSNLDTAGAIGGSPLMLESLPETSDTRGCEQEVMPGVVVGSSNRDASSEVGVESERGSDADGRNGLGEGELVSSVDGGGAEKSSKVTGVLSEEGVDGMETALEPCVASVGSITQVEEGVDRMETSLDDSEASDGSTTQDFDTDVETESSGSSIEEQDMGYGVHIPHTEQAICEVARGNKSSEVKSSDRMSSVTLPTLILASGAAMLPHPSKVLTGGEDAYFIACDGWFGVADGVGQWSFEGINAGLYARELMDGCKKAVMESQGAPEMRTEEVLAKAADEARSPGSSTVLVAHFDGQVLHACNIGDSGFLVIRNGEIYQKSKPMTYGFNFPLQIEKGDDPFKLVQKYTIDLQEGDAIVTATDGLFDNVYEEEIAAVISKSLEAGLKPSEIAEFLVARAKEVGRSATCRSPFSDAALAVGYLGYSGGKLDDVTVVVSVVRKSEV.

Disordered stretches follow at residues 120 to 214 (EVSP…KVTG) and 251 to 279 (SLDD…GSSI). Basic and acidic residues predominate over residues 179-188 (ESERGSDADG). The region spanning 329-564 (AAMLPHPSKV…DDVTVVVSVV (236 aa)) is the PPM-type phosphatase domain. 4 residues coordinate Mn(2+): Asp358, Gly359, Asp488, and Asp555.

Belongs to the PP2C family. Requires Mg(2+) as cofactor. Mn(2+) serves as cofactor.

The catalysed reaction is O-phospho-L-seryl-[protein] + H2O = L-seryl-[protein] + phosphate. It catalyses the reaction O-phospho-L-threonyl-[protein] + H2O = L-threonyl-[protein] + phosphate. May play a role in responses to biotic and abiotic stresses. This is Probable protein phosphatase 2C BIPP2C1 (BIPP2C1) from Oryza sativa subsp. japonica (Rice).